A 135-amino-acid chain; its full sequence is Holo-[acyl-carrier-protein] synthase (135 aa).

The Mg(2+) site is built by Asp-7 and Glu-57.

The protein belongs to the P-Pant transferase superfamily. AcpS family. It depends on Mg(2+) as a cofactor.

Its subcellular location is the cytoplasm. The catalysed reaction is apo-[ACP] + CoA = holo-[ACP] + adenosine 3',5'-bisphosphate + H(+). Transfers the 4'-phosphopantetheine moiety from coenzyme A to a Ser of acyl-carrier-protein. This chain is Holo-[acyl-carrier-protein] synthase, found in Corynebacterium glutamicum (strain R).